Here is a 91-residue protein sequence, read N- to C-terminus: Uteroglobin (91 aa).

Positions 1 to 21 (MKLAITITLAILALCCSPASA) are cleaved as a signal peptide.

This sequence belongs to the secretoglobin family. Antiparallel homodimer; disulfide-linked. Interaction with LMBR1L is controversial. As to expression, club cells (nonciliated cells of the surface epithelium of the pulmonary airways). Expressed in lung, uterus, and prostate.

It is found in the secreted. Its function is as follows. Binds phosphatidylcholine, phosphatidylinositol, polychlorinated biphenyls (PCB) and weakly progesterone, potent inhibitor of phospholipase A2. The sequence is that of Uteroglobin (SCGB1A1) from Equus caballus (Horse).